A 341-amino-acid chain; its full sequence is Tetraacyldisaccharide 4'-kinase (341 aa).

54 to 61 (TVGGAGKT) serves as a coordination point for ATP.

This sequence belongs to the LpxK family.

The enzyme catalyses a lipid A disaccharide + ATP = a lipid IVA + ADP + H(+). It participates in glycolipid biosynthesis; lipid IV(A) biosynthesis; lipid IV(A) from (3R)-3-hydroxytetradecanoyl-[acyl-carrier-protein] and UDP-N-acetyl-alpha-D-glucosamine: step 6/6. Its function is as follows. Transfers the gamma-phosphate of ATP to the 4'-position of a tetraacyldisaccharide 1-phosphate intermediate (termed DS-1-P) to form tetraacyldisaccharide 1,4'-bis-phosphate (lipid IVA). The sequence is that of Tetraacyldisaccharide 4'-kinase from Brucella anthropi (strain ATCC 49188 / DSM 6882 / CCUG 24695 / JCM 21032 / LMG 3331 / NBRC 15819 / NCTC 12168 / Alc 37) (Ochrobactrum anthropi).